The chain runs to 390 residues: uncharacterized protein (390 aa).

A run of 12 helical transmembrane segments spans residues 4–24 (IWLF…LSPL), 40–60 (GWMV…AGPI), 68–88 (TVML…GIAP), 98–118 (FAAG…IPVI), 130–150 (IATA…GFLA), 159–179 (FVLS…MPGI), 205–225 (VILL…SFLG), 236–256 (VSQI…GSLI), 273–293 (GMLL…LFLV), 295–315 (AGFF…MGVF), 329–349 (LSNA…GFLY), and 356–376 (GAVT…YQTI).

It belongs to the major facilitator superfamily.

The protein resides in the cell membrane. This is an uncharacterized protein from Bacillus subtilis (strain 168).